The primary structure comprises 389 residues: Acetate kinase (389 aa).

Residue Asn-7 coordinates Mg(2+). Residue Lys-14 participates in ATP binding. A substrate-binding site is contributed by Arg-88. The active-site Proton donor/acceptor is the Asp-145. ATP contacts are provided by residues 205 to 209 (HLGNG), 279 to 281 (DLR), and 324 to 328 (GIGEN). Residue Glu-375 coordinates Mg(2+).

This sequence belongs to the acetokinase family. Homodimer. Mg(2+) serves as cofactor. It depends on Mn(2+) as a cofactor.

Its subcellular location is the cytoplasm. The enzyme catalyses acetate + ATP = acetyl phosphate + ADP. Its pathway is metabolic intermediate biosynthesis; acetyl-CoA biosynthesis; acetyl-CoA from acetate: step 1/2. Its function is as follows. Catalyzes the formation of acetyl phosphate from acetate and ATP. Can also catalyze the reverse reaction. In Sulfurimonas denitrificans (strain ATCC 33889 / DSM 1251) (Thiomicrospira denitrificans (strain ATCC 33889 / DSM 1251)), this protein is Acetate kinase.